Consider the following 888-residue polypeptide: Mitogen-activated protein kinase kinase kinase 12 (888 aa).

Over residues 26-42 the composition is skewed to basic and acidic residues; it reads MRKLDPDTSDCTPEKDL. Residues 26–104 are disordered; it reads MRKLDPDTSD…TGSPESRASR (79 aa). Thr-37 and Thr-43 each carry phosphothreonine. The span at 64 to 75 shows a compositional bias: pro residues; sequence SPSPGGEPPPEP. Positions 158 to 399 constitute a Protein kinase domain; the sequence is ILDLQWVGSG…FRQILLHLDI (242 aa). ATP-binding positions include 164 to 172 and Lys-185; that span reads VGSGAQGAV. Asp-269 serves as the catalytic Proton acceptor. Leucine-zipper regions lie at residues 423 to 444 and 476 to 497; these read VKLH…EEEL and LNAL…EQAL. A disordered region spans residues 557-620; the sequence is GVGLPGCPKA…GGLGVGPTAW (64 aa). Residues 572–584 show a composition bias toward basic residues; that stretch reads RSRRGKTRHRKAS. Positions 605-615 are enriched in gly residues; sequence GGLGSPGGLGV. Ser-640 is modified (phosphoserine). Disordered regions lie at residues 654 to 731 and 743 to 888; these read RGRG…YQHL and TRSQ…SLPP. Gly residues predominate over residues 704 to 725; that stretch reads PGEGVGLLGTGREGTTGRGGSR. Residues 752-763 are compositionally biased toward acidic residues; that stretch reads SEEEEGEVDSEV. Polar residues-rich tracts occupy residues 776–789 and 798–812; these read NMRQ…SENP and SEPS…GSTN. The span at 813 to 823 shows a compositional bias: basic and acidic residues; it reads TDERPDERSDD.

It belongs to the protein kinase superfamily. STE Ser/Thr protein kinase family. MAP kinase kinase kinase subfamily. Homodimer. Interacts with MBIP. Mg(2+) is required as a cofactor. In terms of processing, autophosphorylated on Ser/Thr. Phosphorylated in cytosol under basal conditions and dephosphorylated when membrane-associated. Post-translationally, the activity of MAP3K12 can be regulated through its proteasomal degradation. APOE, through a receptor-mediated mechanism, activates MAP3K12 by preventing its proteasomal degradation.

It is found in the cytoplasm. It localises to the cell membrane. The catalysed reaction is L-seryl-[protein] + ATP = O-phospho-L-seryl-[protein] + ADP + H(+). The enzyme catalyses L-threonyl-[protein] + ATP = O-phospho-L-threonyl-[protein] + ADP + H(+). Functionally, part of a non-canonical MAPK signaling pathway. Activated by APOE, enhances the AP-1-mediated transcription of APP, via a MAP kinase signal transduction pathway composed of MAP2K7 and MAPK1/ERK2 and MAPK3/ERK1. May be an activator of the JNK/SAPK pathway. The protein is Mitogen-activated protein kinase kinase kinase 12 (Map3k12) of Rattus norvegicus (Rat).